Reading from the N-terminus, the 184-residue chain is Ribosome-recycling factor (184 aa).

The span at R133 to K162 shows a compositional bias: basic and acidic residues. Residues R133–L163 form a disordered region.

The protein belongs to the RRF family.

Its subcellular location is the cytoplasm. Functionally, responsible for the release of ribosomes from messenger RNA at the termination of protein biosynthesis. May increase the efficiency of translation by recycling ribosomes from one round of translation to another. The chain is Ribosome-recycling factor from Sphingopyxis alaskensis (strain DSM 13593 / LMG 18877 / RB2256) (Sphingomonas alaskensis).